The primary structure comprises 175 residues: Shikimate kinase (175 aa).

14–19 provides a ligand contact to ATP; that stretch reads GAGKST. Mg(2+) is bound at residue Ser-18. Substrate-binding residues include Asp-36, Arg-60, and Gly-82. Arg-120 is an ATP binding site. Position 140 (Arg-140) interacts with substrate. Gln-157 is a binding site for ATP.

It belongs to the shikimate kinase family. As to quaternary structure, monomer. The cofactor is Mg(2+).

It is found in the cytoplasm. It catalyses the reaction shikimate + ATP = 3-phosphoshikimate + ADP + H(+). It participates in metabolic intermediate biosynthesis; chorismate biosynthesis; chorismate from D-erythrose 4-phosphate and phosphoenolpyruvate: step 5/7. In terms of biological role, catalyzes the specific phosphorylation of the 3-hydroxyl group of shikimic acid using ATP as a cosubstrate. In Mannheimia succiniciproducens (strain KCTC 0769BP / MBEL55E), this protein is Shikimate kinase.